We begin with the raw amino-acid sequence, 164 residues long: Cyclic pyranopterin monophosphate synthase (164 aa).

Substrate-binding positions include 77–79 (LCH) and 115–116 (ME). Residue aspartate 130 is part of the active site.

This sequence belongs to the MoaC family. Homohexamer; trimer of dimers.

The catalysed reaction is (8S)-3',8-cyclo-7,8-dihydroguanosine 5'-triphosphate = cyclic pyranopterin phosphate + diphosphate. The protein operates within cofactor biosynthesis; molybdopterin biosynthesis. Its function is as follows. Catalyzes the conversion of (8S)-3',8-cyclo-7,8-dihydroguanosine 5'-triphosphate to cyclic pyranopterin monophosphate (cPMP). This Rhizobium meliloti (strain 1021) (Ensifer meliloti) protein is Cyclic pyranopterin monophosphate synthase.